A 570-amino-acid chain; its full sequence is MAEFNIDELLKNVLENPSTEISEETLKQLYQRTNPYKQFKNDSRVAFCSFTNLREQYIRRLIMTSFIGYVFKALQEWMPSYSKPTHTTKTLLSELITLVDTLKQETNDVPSESVVNTILSIADSCKTQTQKSKEAKTTIDSFLREHFVFDPNLHAQSAYTCADTNASTSADTNASTCADTNVDTCASTCADTNVDTCADTCASTCASTCASTCASTCADTNVDTCADTCVSTCASTCANTEYADLADPERIPLHIMQKTLNVPNELQADIDAITQTPQGYRAAAHILQNIELHQSIKHMLENPRAFKPILFNTKITRYLSQHIPPQDTFYKWNYYIEDNYEELRAATESIYPEKPDLEFAFIIYDVVDSSNQQKVDEFYYKYKDQIFSEVSSIQLGNWTLLGSFKANRERYNYFNQNNEIIKRILDRHEEDLKIGKEILRNTIYHKKAKNIQETGPDAPGLSIYNSTFHTDSGIKGLLSFKELKNLEKASGNIKKAREYDFIDDCEEKIKQLLSKENLTPDEESELIKTKKQLNNALEMLNVPDDTIRVDMWVNNNNKLEKEILYTKAEL.

Tandem repeats lie at residues cysteine 161–threonine 164, asparagine 165–threonine 168, serine 169–threonine 172, asparagine 173–threonine 176, cysteine 177–threonine 180, asparagine 181–threonine 184, cysteine 185–threonine 188, cysteine 189–threonine 192, asparagine 193–threonine 196, cysteine 197–threonine 200, cysteine 201–threonine 204, cysteine 205–threonine 208, cysteine 209–threonine 212, cysteine 213–threonine 216, cysteine 217–threonine 220, asparagine 221–threonine 224, cysteine 225–threonine 228, cysteine 229–threonine 232, cysteine 233–threonine 236, and cysteine 237–threonine 240. Residues cysteine 161–threonine 240 form a 20 X 4 AA tandem repeats of [CNS]-[ATV]-[DNS]-T region.

It belongs to the asfivirus B602L family.

It localises to the host cytoplasm. Functionally, plays an essential role in the assembly of the icosahedral capsid of the virus. Allows the assembly of 3 molecules of hexon protein p72 and formation of a thermostable trimer. The polypeptide is Protein B602L (African swine fever virus (isolate Tick/South Africa/Pretoriuskop Pr4/1996) (ASFV)).